The sequence spans 333 residues: Cytosolic Fe-S cluster assembly factor NBP35 (333 aa).

[4Fe-4S] cluster-binding residues include C32, C46, C49, and C55. 85-92 (GKGGVGKS) contacts ATP. 2 residues coordinate [4Fe-4S] cluster: C258 and C261.

It belongs to the Mrp/NBP35 ATP-binding proteins family. NUBP1/NBP35 subfamily. In terms of assembly, heterotetramer of 2 NBP35 and 2 CFD1 chains. [4Fe-4S] cluster serves as cofactor.

The protein resides in the cytoplasm. It localises to the nucleus. Its function is as follows. Component of the cytosolic iron-sulfur (Fe/S) protein assembly (CIA) machinery. Required for maturation of extramitochondrial Fe-S proteins. The NBP35-CFD1 heterotetramer forms a Fe-S scaffold complex, mediating the de novo assembly of an Fe-S cluster and its transfer to target apoproteins. Required for biogenesis and export of both ribosomal subunits, which may reflect a role in assembly of the Fe/S clusters in RLI1, a protein which performs rRNA processing and ribosome export. The sequence is that of Cytosolic Fe-S cluster assembly factor NBP35 from Eremothecium gossypii (strain ATCC 10895 / CBS 109.51 / FGSC 9923 / NRRL Y-1056) (Yeast).